Consider the following 396-residue polypeptide: Elongation factor Tu (396 aa).

One can recognise a tr-type G domain in the interval 10 to 205 (KPHVNVGTIG…AVDEYIPTPE (196 aa)). A G1 region spans residues 19–26 (GHVDHGKT). 19 to 26 (GHVDHGKT) is a GTP binding site. Thr-26 lines the Mg(2+) pocket. Residues 61–65 (GITIA) form a G2 region. The interval 82-85 (DCPG) is G3. Residues 82–86 (DCPGH) and 137–140 (NKTD) each bind GTP. Residues 137 to 140 (NKTD) are G4. A G5 region spans residues 175–177 (SAL).

The protein belongs to the TRAFAC class translation factor GTPase superfamily. Classic translation factor GTPase family. EF-Tu/EF-1A subfamily. Monomer.

The protein localises to the cytoplasm. The enzyme catalyses GTP + H2O = GDP + phosphate + H(+). Its function is as follows. GTP hydrolase that promotes the GTP-dependent binding of aminoacyl-tRNA to the A-site of ribosomes during protein biosynthesis. The chain is Elongation factor Tu from Salinibacter ruber (strain DSM 13855 / M31).